A 1107-amino-acid chain; its full sequence is Membrane-associated guanylate kinase, WW and PDZ domain-containing protein 3 (1107 aa).

The PDZ 1 domain maps to 17–102; the sequence is ECGLSGVGGD…PIRLKTVKPG (86 aa). Residues 110 to 284 enclose the Guanylate kinase-like domain; sequence RHYLSLQFQK…SMDFRNYLTR (175 aa). Residue 117-124 coordinates ATP; that stretch reads FQKGSIDH. Positions 210–277 are disordered; that stretch reads FDTETQRKRT…SYNQTNSSMD (68 aa). Over residues 220-231 the composition is skewed to polar residues; that stretch reads TSVSKMQRTDSS. Residues 232–241 show a composition bias toward acidic residues; the sequence is LPEEEDEEER. The segment covering 251–261 has biased composition (basic and acidic residues); that stretch reads TDHRDRQEPSE. Positions 267-277 are enriched in polar residues; sequence PSYNQTNSSMD. WW domains follow at residues 289–322 and 335–368; these read EPLPKNWEMAYTEAGMIYFIDHNTKTTTWLDPRL and GELPYGWEKIEDPQYGTYYVDHINQKTQFDNPVL. The tract at residues 374 to 398 is disordered; sequence KQLNPAPSEGTVHQEPENSQFTRDP. PDZ domains follow at residues 407–489, 577–653, 727–809, and 853–940; these read HTSL…TLCR, TIPL…LILR, DVFL…TVRR, and DVIL…IAEE. Residues 941 to 975 are disordered; that stretch reads EHRGPPSGSNSARQSPAPQHRPMGQTQPTYGTLDR. The segment covering 947–957 has biased composition (polar residues); it reads SGSNSARQSPA. The region spanning 1003-1085 is the PDZ 6 domain; it reads PVELERGPRG…KVLLLLRPGT (83 aa).

This sequence belongs to the MAGUK family.

It is found in the cell membrane. The protein resides in the cell junction. It localises to the tight junction. Acts as a scaffolding protein at cell-cell junctions, thereby regulating various cellular and signaling processes. In Xenopus tropicalis (Western clawed frog), this protein is Membrane-associated guanylate kinase, WW and PDZ domain-containing protein 3 (magi3).